Consider the following 1466-residue polypeptide: Helicase ARIP4 (1466 aa).

2 disordered regions span residues 1 to 137 (MSDE…ERRK) and 185 to 235 (DSSS…THVN). Residues 11–49 (PDLDPDVELEDEEEEEEEEEVAVEEHDRDDEEGLLDDTS) are compositionally biased toward acidic residues. A compositionally biased stretch (low complexity) spans 72-82 (TSTTSSQSEPS). Basic residues predominate over residues 99–114 (KKRAQKPSHMRRNIRK). Glycyl lysine isopeptide (Lys-Gly) (interchain with G-Cter in SUMO2) cross-links involve residues lysine 114 and lysine 126. Residues 191 to 200 (EDEKSSRDEV) are compositionally biased toward basic and acidic residues. Residue lysine 271 forms a Glycyl lysine isopeptide (Lys-Gly) (interchain with G-Cter in SUMO2) linkage. The region spanning 291–511 (RFKTSSGFGC…WCMVDFVRPD (221 aa)) is the Helicase ATP-binding domain. 304–311 (HSMGLGKT) is a binding site for ATP. The short motif at 462 to 465 (DEGH) is the DEAH box element. An LXXLL motif 1 motif is present at residues 550 to 554 (LHSLL). The disordered stretch occupies residues 649-670 (SAGTSARCPPHGTKVKGEDSAL). Residues lysine 664, lysine 681, lysine 758, lysine 900, lysine 1013, and lysine 1017 each participate in a glycyl lysine isopeptide (Lys-Gly) (interchain with G-Cter in SUMO2) cross-link. Residues 727–895 (HLIEESVKLG…RVVDDLNPML (169 aa)) form the Helicase C-terminal domain. 2 disordered regions span residues 1026–1045 (QSTP…GVSS) and 1120–1170 (ATGK…VSPD). Residues 1135 to 1154 (SGSQGPSLASTSNGRHSASS) are compositionally biased toward polar residues. Residues serine 1168 and serine 1171 each carry the phosphoserine modification. Disordered regions lie at residues 1184-1212 (VAAA…MDNS) and 1259-1281 (TPSV…APVQ). Threonine 1259 bears the Phosphothreonine mark. An LXXLL motif 2 motif is present at residues 1328–1332 (LSNLL). Positions 1444–1466 (AEVGFSSNDDEDKDDDVIEVTGK) are disordered. A compositionally biased stretch (acidic residues) spans 1451–1466 (NDDEDKDDDVIEVTGK).

Belongs to the SNF2/RAD54 helicase family. Interacts with AR via its N-terminus. Interacts with DYRK1A. Binds DNA and mononucleosomes, but does not seem to form large multiprotein complexes. Sumoylated. Expressed at relatively low level, with highest expression in testis, liver and kidney. In brain, it is expressed in hippocampal and cerebellar neurons. In testis, it is present at high level in Sertoli cell nuclei. Also present in Leydig cell (at protein level).

It localises to the nucleus. It carries out the reaction ATP + H2O = ADP + phosphate + H(+). Its activity is regulated as follows. Enzyme activity is enhanced by dsDNA (double-stranded DNA) and ssDNA (single-stranded DNA). DNA helicase that modulates androgen receptor (AR)-dependent transactivation in a promoter-dependent manner. Not able to remodel mononucleosomes in vitro. Acts as an AR-coregulator in Sertoli cells. This chain is Helicase ARIP4 (Rad54l2), found in Mus musculus (Mouse).